The primary structure comprises 171 residues: MGGVSDERLDLVNERDEVVGQILRTDPALRWERVRVVNAFLRNSQGQLWIPRRSPSKSLFPNALDVSVGGAVQSGETYEEAFRREAREELNVEIDALSWRPLASFSPFQTTLSSFMCVYELRSDATPIFNPNDISGGEWLTPEHLLARIAAGEAAKGDLAELVRRCYREEE.

Residues 32-162 (ERVRVVNAFL…EAAKGDLAEL (131 aa)) form the Nudix hydrolase domain. The Nudix box motif lies at 69 to 91 (GGAVQSGETYEEAFRREAREELN). The Mg(2+) site is built by Glu85 and Glu89.

Belongs to the Nudix hydrolase family. As to quaternary structure, monomer. Requires Mg(2+) as cofactor.

Inhibited by zinc, calcium or copper ions. Hydrolase that converts various nucleotide triphosphates (NTPs) to the corresponding nucleotide monophosphates and diphosphate, and nucleotide diphosphates to nucleotide monophosphates and inorganic phosphate. Has a marked preference for cytosine ribonucleoside 5'-diphosphate (CDP) and cytosine ribonucleoside 5'-triphosphate (CTP). Has lower activity towards the deoxyribose nucleotides dCDP and dCTP, and towards dGDP, TDP and UDP. The sequence is that of Nudix hydrolase DR_0079 from Deinococcus radiodurans (strain ATCC 13939 / DSM 20539 / JCM 16871 / CCUG 27074 / LMG 4051 / NBRC 15346 / NCIMB 9279 / VKM B-1422 / R1).